The primary structure comprises 226 residues: Triosephosphate isomerase (226 aa).

A substrate-binding site is contributed by 12 to 14 (NFK). His-96 (electrophile) is an active-site residue. The Proton acceptor role is filled by Glu-144. Residues Ile-149, Gly-184, and 205–206 (AS) contribute to the substrate site.

It belongs to the triosephosphate isomerase family. In terms of assembly, homotetramer; dimer of dimers.

Its subcellular location is the cytoplasm. The catalysed reaction is D-glyceraldehyde 3-phosphate = dihydroxyacetone phosphate. It functions in the pathway carbohydrate biosynthesis; gluconeogenesis. The protein operates within carbohydrate degradation; glycolysis; D-glyceraldehyde 3-phosphate from glycerone phosphate: step 1/1. Functionally, involved in the gluconeogenesis. Catalyzes stereospecifically the conversion of dihydroxyacetone phosphate (DHAP) to D-glyceraldehyde-3-phosphate (G3P). This chain is Triosephosphate isomerase, found in Thermococcus kodakarensis (strain ATCC BAA-918 / JCM 12380 / KOD1) (Pyrococcus kodakaraensis (strain KOD1)).